Reading from the N-terminus, the 794-residue chain is Kinesin-like protein KIN-13A (794 aa).

The Kinesin motor domain occupies 193 to 526 (KIKVVVRKRP…LRYADRVKSL (334 aa)). 282 to 289 (GQTGSGKT) lines the ATP pocket. The tract at residues 525–699 (SLSKSGNSKK…YETASRQYET (175 aa)) is disordered. Positions 569 to 579 (ETRRRVVEKDS) are enriched in basic and acidic residues. 2 stretches are compositionally biased toward polar residues: residues 580–593 (NSST…QPTN) and 611–632 (EPNS…YPQE). Basic and acidic residues predominate over residues 650–668 (GLREEKPDRPQNWSKRDVS). A compositionally biased stretch (polar residues) spans 669 to 696 (SSDIPTLTNFRQNASETASRQYETASRQ). A coiled-coil region spans residues 705 to 742 (ENLDALLEEEEALIAAHRKEIEDTMEIVREEMKLLAEV).

It belongs to the TRAFAC class myosin-kinesin ATPase superfamily. Kinesin family. KIN-13 subfamily. Component of the active ARAC10-IRC5-KIN13A complex. Interacts (via-C-terminus) with ICR2 and ICR5 (via N-terminus). No interactions with ICR1. In terms of tissue distribution, expressed in leaves, roots, young and mature seedlings. Preferentially expressed in the secondary cell wall pits of differentiating metaxylem vessel cells (at the protein level).

The protein localises to the golgi apparatus. It is found in the golgi stack. It localises to the cytoplasm. Its subcellular location is the cytoskeleton. Its function is as follows. Internal motor kinesin involved in trichome morphogenesis. Participates in regulating the formation of Golgi-associated vesicles. Plays a central role in microtubule disassembly via the active ARAC10-ICR5 cascade, which establishes the secondary cell wall pattern in metaxylem vessel cells. Acts redundantly with KIN13B to modulate cell wall synthesis and cell expansion via the THE1 pathway. The sequence is that of Kinesin-like protein KIN-13A from Arabidopsis thaliana (Mouse-ear cress).